The sequence spans 336 residues: 3-isopropylmalate dehydrogenase (336 aa).

4 residues coordinate substrate: R86, R96, R117, and D201. Mg(2+) contacts are provided by D201, D225, and D229. An NAD(+)-binding site is contributed by G258–N270.

This sequence belongs to the isocitrate and isopropylmalate dehydrogenases family. Homotetramer. Mg(2+) is required as a cofactor. Mn(2+) serves as cofactor.

The protein resides in the cytoplasm. The catalysed reaction is (2R,3S)-3-isopropylmalate + NAD(+) = 4-methyl-2-oxopentanoate + CO2 + NADH. It participates in amino-acid biosynthesis; L-leucine biosynthesis; L-leucine from 3-methyl-2-oxobutanoate: step 3/4. Its function is as follows. Catalyzes the oxidation of 3-carboxy-2-hydroxy-4-methylpentanoate (3-isopropylmalate) to 3-carboxy-4-methyl-2-oxopentanoate. The product decarboxylates to 4-methyl-2 oxopentanoate. The protein is 3-isopropylmalate dehydrogenase (leuB) of Saccharolobus solfataricus (strain ATCC 35092 / DSM 1617 / JCM 11322 / P2) (Sulfolobus solfataricus).